The chain runs to 172 residues: uncharacterized protein (172 aa).

Belongs to the flavoredoxin family. It depends on FMN as a cofactor.

This is an uncharacterized protein from Pyrococcus abyssi (strain GE5 / Orsay).